Consider the following 78-residue polypeptide: UPF0270 protein YPTB3725 (78 aa).

This sequence belongs to the UPF0270 family.

This chain is UPF0270 protein YPTB3725, found in Yersinia pseudotuberculosis serotype I (strain IP32953).